A 431-amino-acid chain; its full sequence is Citrate synthase (431 aa).

Catalysis depends on residues His306 and Asp364.

The protein belongs to the citrate synthase family.

The catalysed reaction is oxaloacetate + acetyl-CoA + H2O = citrate + CoA + H(+). It participates in carbohydrate metabolism; tricarboxylic acid cycle; isocitrate from oxaloacetate: step 1/2. This chain is Citrate synthase (gltA), found in Bartonella henselae (strain ATCC 49882 / DSM 28221 / CCUG 30454 / Houston 1) (Rochalimaea henselae).